We begin with the raw amino-acid sequence, 122 residues long: Large ribosomal subunit protein uL14 (122 aa).

Belongs to the universal ribosomal protein uL14 family. Part of the 50S ribosomal subunit. Forms a cluster with proteins L3 and L19. In the 70S ribosome, L14 and L19 interact and together make contacts with the 16S rRNA in bridges B5 and B8.

Functionally, binds to 23S rRNA. Forms part of two intersubunit bridges in the 70S ribosome. The polypeptide is Large ribosomal subunit protein uL14 (Maridesulfovibrio salexigens (strain ATCC 14822 / DSM 2638 / NCIMB 8403 / VKM B-1763) (Desulfovibrio salexigens)).